The primary structure comprises 230 residues: Enolase-phosphatase E1 (230 aa).

Belongs to the HAD-like hydrolase superfamily. MasA/MtnC family. In terms of assembly, monomer. Requires Mg(2+) as cofactor.

It carries out the reaction 5-methylsulfanyl-2,3-dioxopentyl phosphate + H2O = 1,2-dihydroxy-5-(methylsulfanyl)pent-1-en-3-one + phosphate. The protein operates within amino-acid biosynthesis; L-methionine biosynthesis via salvage pathway; L-methionine from S-methyl-5-thio-alpha-D-ribose 1-phosphate: step 3/6. It functions in the pathway amino-acid biosynthesis; L-methionine biosynthesis via salvage pathway; L-methionine from S-methyl-5-thio-alpha-D-ribose 1-phosphate: step 4/6. Its function is as follows. Bifunctional enzyme that catalyzes the enolization of 2,3-diketo-5-methylthiopentyl-1-phosphate (DK-MTP-1-P) into the intermediate 2-hydroxy-3-keto-5-methylthiopentenyl-1-phosphate (HK-MTPenyl-1-P), which is then dephosphorylated to form the acireductone 1,2-dihydroxy-3-keto-5-methylthiopentene (DHK-MTPene). This chain is Enolase-phosphatase E1, found in Sulfurihydrogenibium sp. (strain YO3AOP1).